The chain runs to 218 residues: Fibroblast growth factor 15 (218 aa).

A signal peptide spans 1–25 (MARKWNGRAVARALVLATLWLAVSG).

Belongs to the heparin-binding growth factors family. In terms of assembly, interacts with MALRD1. In terms of tissue distribution, expressed in the developing brain.

Its subcellular location is the secreted. Its function is as follows. Involved in the suppression of bile acid biosynthesis through down-regulation of CYP7A1 expression. This is Fibroblast growth factor 15 (Fgf15) from Mus musculus (Mouse).